Here is a 139-residue protein sequence, read N- to C-terminus: Actin-depolymerizing factor 1 (139 aa).

The ADF-H domain maps to 5–139; the sequence is SSGLAVNDEC…SLDIVRSRTN (135 aa).

The protein belongs to the actin-binding proteins ADF family. Expressed in pollen.

Its function is as follows. Actin-depolymerizing protein. Severs actin filaments (F-actin) and binds to actin monomers. The polypeptide is Actin-depolymerizing factor 1 (ADF1) (Zea mays (Maize)).